Consider the following 208-residue polypeptide: Uracil phosphoribosyltransferase (208 aa).

5-phospho-alpha-D-ribose 1-diphosphate-binding positions include R78, R103, and 130–138; that span reads DPMLATGGS. Uracil-binding positions include I193 and 198 to 200; that span reads GDA. Position 199 (D199) interacts with 5-phospho-alpha-D-ribose 1-diphosphate.

This sequence belongs to the UPRTase family. Mg(2+) is required as a cofactor.

The catalysed reaction is UMP + diphosphate = 5-phospho-alpha-D-ribose 1-diphosphate + uracil. The protein operates within pyrimidine metabolism; UMP biosynthesis via salvage pathway; UMP from uracil: step 1/1. Allosterically activated by GTP. Functionally, catalyzes the conversion of uracil and 5-phospho-alpha-D-ribose 1-diphosphate (PRPP) to UMP and diphosphate. The protein is Uracil phosphoribosyltransferase of Aliivibrio fischeri (strain MJ11) (Vibrio fischeri).